The primary structure comprises 298 residues: UDP-N-acetylenolpyruvoylglucosamine reductase (298 aa).

Residues 26–191 (KTGGPADWLA…LDATFALEPG (166 aa)) enclose the FAD-binding PCMH-type domain. Arginine 170 is a catalytic residue. Residue serine 220 is the Proton donor of the active site. Residue glutamate 290 is part of the active site.

Belongs to the MurB family. FAD is required as a cofactor.

Its subcellular location is the cytoplasm. The enzyme catalyses UDP-N-acetyl-alpha-D-muramate + NADP(+) = UDP-N-acetyl-3-O-(1-carboxyvinyl)-alpha-D-glucosamine + NADPH + H(+). It participates in cell wall biogenesis; peptidoglycan biosynthesis. In terms of biological role, cell wall formation. This is UDP-N-acetylenolpyruvoylglucosamine reductase from Limosilactobacillus reuteri subsp. reuteri (strain JCM 1112) (Lactobacillus reuteri).